The chain runs to 58 residues: UPF0391 membrane protein Sden_3712 (58 aa).

Transmembrane regions (helical) follow at residues 6–26 (LTFL…IAGA) and 27–47 (AAGI…ISLV).

The protein belongs to the UPF0391 family.

It is found in the cell membrane. The sequence is that of UPF0391 membrane protein Sden_3712 from Shewanella denitrificans (strain OS217 / ATCC BAA-1090 / DSM 15013).